A 362-amino-acid polypeptide reads, in one-letter code: Methionine import ATP-binding protein MetN (362 aa).

The region spanning 2 to 241 (IHIENLSKTY…PRHEVTRAMV (240 aa)) is the ABC transporter domain. 38-45 (GPSGAGKS) lines the ATP pocket.

It belongs to the ABC transporter superfamily. Methionine importer (TC 3.A.1.24) family. The complex is composed of two ATP-binding proteins (MetN), two transmembrane proteins (MetI) and a solute-binding protein (MetQ).

It localises to the cell inner membrane. It catalyses the reaction L-methionine(out) + ATP + H2O = L-methionine(in) + ADP + phosphate + H(+). It carries out the reaction D-methionine(out) + ATP + H2O = D-methionine(in) + ADP + phosphate + H(+). Part of the ABC transporter complex MetNIQ involved in methionine import. Responsible for energy coupling to the transport system. The chain is Methionine import ATP-binding protein MetN from Bordetella bronchiseptica (strain ATCC BAA-588 / NCTC 13252 / RB50) (Alcaligenes bronchisepticus).